The primary structure comprises 433 residues: Glutamate-1-semialdehyde 2,1-aminomutase (433 aa).

The residue at position 271 (lysine 271) is an N6-(pyridoxal phosphate)lysine.

This sequence belongs to the class-III pyridoxal-phosphate-dependent aminotransferase family. HemL subfamily. Homodimer. It depends on pyridoxal 5'-phosphate as a cofactor.

It localises to the cytoplasm. It catalyses the reaction (S)-4-amino-5-oxopentanoate = 5-aminolevulinate. Its pathway is porphyrin-containing compound metabolism; protoporphyrin-IX biosynthesis; 5-aminolevulinate from L-glutamyl-tRNA(Glu): step 2/2. It participates in porphyrin-containing compound metabolism; chlorophyll biosynthesis. The polypeptide is Glutamate-1-semialdehyde 2,1-aminomutase (Prochlorococcus marinus (strain MIT 9301)).